Here is a 368-residue protein sequence, read N- to C-terminus: Aminomethyltransferase (368 aa).

This sequence belongs to the GcvT family. The glycine cleavage system is composed of four proteins: P, T, L and H.

The catalysed reaction is N(6)-[(R)-S(8)-aminomethyldihydrolipoyl]-L-lysyl-[protein] + (6S)-5,6,7,8-tetrahydrofolate = N(6)-[(R)-dihydrolipoyl]-L-lysyl-[protein] + (6R)-5,10-methylene-5,6,7,8-tetrahydrofolate + NH4(+). The glycine cleavage system catalyzes the degradation of glycine. This chain is Aminomethyltransferase, found in Alkaliphilus oremlandii (strain OhILAs) (Clostridium oremlandii (strain OhILAs)).